The sequence spans 43 residues: Protein PsbN (43 aa).

Residues 5–27 traverse the membrane as a helical segment; sequence NLVAIFVSCLLVSLTGYALYTSF.

Belongs to the PsbN family.

The protein localises to the plastid. The protein resides in the chloroplast thylakoid membrane. May play a role in photosystem I and II biogenesis. This chain is Protein PsbN, found in Ephedra sinica (Chinese ephedra).